A 371-amino-acid chain; its full sequence is tRNA-specific 2-thiouridylase MnmA (371 aa).

Residues 13–20 (GMSGGVDS) and Met39 contribute to the ATP site. The tract at residues 99 to 101 (NPD) is interaction with target base in tRNA. Cys104 functions as the Nucleophile in the catalytic mechanism. A disulfide bridge links Cys104 with Cys200. Gly128 is an ATP binding site. Positions 150 to 152 (KDQ) are interaction with tRNA. Cys200 serves as the catalytic Cysteine persulfide intermediate. The interaction with tRNA stretch occupies residues 308-309 (RY).

It belongs to the MnmA/TRMU family.

It localises to the cytoplasm. It catalyses the reaction S-sulfanyl-L-cysteinyl-[protein] + uridine(34) in tRNA + AH2 + ATP = 2-thiouridine(34) in tRNA + L-cysteinyl-[protein] + A + AMP + diphosphate + H(+). In terms of biological role, catalyzes the 2-thiolation of uridine at the wobble position (U34) of tRNA, leading to the formation of s(2)U34. This Listeria monocytogenes serovar 1/2a (strain ATCC BAA-679 / EGD-e) protein is tRNA-specific 2-thiouridylase MnmA.